Reading from the N-terminus, the 330-residue chain is ADP-L-glycero-D-manno-heptose-6-epimerase (330 aa).

Residues phenylalanine 11–isoleucine 12, aspartate 32–asparagine 33, lysine 39, lysine 54, glutamate 75–serine 79, and asparagine 92 each bind NADP(+). The active-site Proton acceptor is tyrosine 139. Lysine 143 serves as a coordination point for NADP(+). Asparagine 168 is a substrate binding site. NADP(+)-binding residues include valine 169 and lysine 177. The Proton acceptor role is filled by lysine 177. Substrate is bound by residues arginine 179, histidine 186, phenylalanine 200–tyrosine 203, arginine 213, and tyrosine 292.

Belongs to the NAD(P)-dependent epimerase/dehydratase family. HldD subfamily. As to quaternary structure, homopentamer. The cofactor is NADP(+).

The enzyme catalyses ADP-D-glycero-beta-D-manno-heptose = ADP-L-glycero-beta-D-manno-heptose. It participates in nucleotide-sugar biosynthesis; ADP-L-glycero-beta-D-manno-heptose biosynthesis; ADP-L-glycero-beta-D-manno-heptose from D-glycero-beta-D-manno-heptose 7-phosphate: step 4/4. Functionally, catalyzes the interconversion between ADP-D-glycero-beta-D-manno-heptose and ADP-L-glycero-beta-D-manno-heptose via an epimerization at carbon 6 of the heptose. This is ADP-L-glycero-D-manno-heptose-6-epimerase from Burkholderia multivorans (strain ATCC 17616 / 249).